The primary structure comprises 337 residues: MVLLGRSAAELKAWVEAQGQPGYRGQQLHQWLYRKGARSLQEITVFPKQWRAALADVEIGRSEIRYRHDAQDGTVKLLLALADGETIETVGIPSSDRLTVCVSSQVGCPMACDFCATGKGGYRRNLACHEILDQVLTIQSEMGRRVSHVVFMGMGEPLLNLPAVLQAITCLNRDIGIGQRHITISTVGIPQQIQRLAQHQLQTTLAVSLHAPNQALREQLIPSAKHYPLSQLIADCRAYVQQTGRRITFEYTVLAGVNDRPQHAEELAQLLRGFQSHVNLIPYNPIAEAAYQRPTDQHLRQFLSQLQALGVTASIRRSRGLDRQAACGQLRQAQLIA.

E88 serves as the catalytic Proton acceptor. One can recognise a Radical SAM core domain in the interval 94-322 (SSDRLTVCVS…ASIRRSRGLD (229 aa)). Residues C101 and C327 are joined by a disulfide bond. Residues C108, C112, and C115 each coordinate [4Fe-4S] cluster. Residues 155–156 (GE), S185, 208–210 (SLH), and N284 contribute to the S-adenosyl-L-methionine site. Residue C327 is the S-methylcysteine intermediate of the active site.

This sequence belongs to the radical SAM superfamily. RlmN family. It depends on [4Fe-4S] cluster as a cofactor.

It is found in the cytoplasm. The enzyme catalyses adenosine(2503) in 23S rRNA + 2 reduced [2Fe-2S]-[ferredoxin] + 2 S-adenosyl-L-methionine = 2-methyladenosine(2503) in 23S rRNA + 5'-deoxyadenosine + L-methionine + 2 oxidized [2Fe-2S]-[ferredoxin] + S-adenosyl-L-homocysteine. It carries out the reaction adenosine(37) in tRNA + 2 reduced [2Fe-2S]-[ferredoxin] + 2 S-adenosyl-L-methionine = 2-methyladenosine(37) in tRNA + 5'-deoxyadenosine + L-methionine + 2 oxidized [2Fe-2S]-[ferredoxin] + S-adenosyl-L-homocysteine. Specifically methylates position 2 of adenine 2503 in 23S rRNA and position 2 of adenine 37 in tRNAs. This chain is Probable dual-specificity RNA methyltransferase RlmN, found in Thermosynechococcus vestitus (strain NIES-2133 / IAM M-273 / BP-1).